The primary structure comprises 423 residues: Gamma-glutamyl phosphate reductase (423 aa).

Belongs to the gamma-glutamyl phosphate reductase family.

Its subcellular location is the cytoplasm. The enzyme catalyses L-glutamate 5-semialdehyde + phosphate + NADP(+) = L-glutamyl 5-phosphate + NADPH + H(+). The protein operates within amino-acid biosynthesis; L-proline biosynthesis; L-glutamate 5-semialdehyde from L-glutamate: step 2/2. Functionally, catalyzes the NADPH-dependent reduction of L-glutamate 5-phosphate into L-glutamate 5-semialdehyde and phosphate. The product spontaneously undergoes cyclization to form 1-pyrroline-5-carboxylate. The protein is Gamma-glutamyl phosphate reductase of Burkholderia ambifaria (strain MC40-6).